The sequence spans 297 residues: Acetaldehyde dehydrogenase (297 aa).

15 to 18 (SGSI) serves as a coordination point for NAD(+). The Acyl-thioester intermediate role is filled by cysteine 130. Residues 162 to 170 (SAGIATREN) and asparagine 272 each bind NAD(+).

Belongs to the acetaldehyde dehydrogenase family.

The enzyme catalyses acetaldehyde + NAD(+) + CoA = acetyl-CoA + NADH + H(+). The protein is Acetaldehyde dehydrogenase of Burkholderia pseudomallei (strain 1106a).